We begin with the raw amino-acid sequence, 999 residues long: Embryonic polarity protein dorsal (999 aa).

Positions 1–44 (MFPNQNNGAAPGQGPAVDGQQSLNYNGLPAQQQQQLAQSTKNVR) are disordered. Residues 47–342 (PYVKITEQPA…TFWNLHRHLK (296 aa)) form the RHD domain. S312 carries the phosphoserine; by PKA modification. 2 disordered regions span residues 389–424 (FNHE…EQYT) and 670–851 (QARK…SVSG). Residues 402 to 424 (EQEQSVQQEQYTQEQSLQQEQYT) are compositionally biased toward low complexity. Residues 668-677 (NSQARKPETP) carry the Nuclear export signal motif. A compositionally biased stretch (pro residues) spans 677-686 (PMRPVPPVPP). Positions 710 to 719 (KQDSNAENRS) are enriched in basic and acidic residues. Polar residues predominate over residues 720–734 (IEANTVQTKPSTGES). Positions 756-773 (KKPGFFSKLFSRRKSKPD) match the Nuclear localization signal motif. 2 stretches are compositionally biased toward low complexity: residues 819–829 (SNPAPAKSSPV) and 836–851 (SKLT…SVSG).

Interacts with tamo via the nuclear localization signal. Interacts with emb, a component of the nuclear export complex. In terms of tissue distribution, in unchallenged larvae, expression of both isoforms is seen in fat body and gut (isoform A is more abundant). After immune challenge levels of both isoforms are enhanced.

It localises to the cytoplasm. The protein resides in the nucleus. Embryonic developmental transcription factor. The lateral or ventral identity of a cell depends upon the concentration of this protein in its nucleus during the blastoderm stage. Acts as a morphogenetic transcription factor that specifically binds to the kappa-B-related consensus sequence 5'-GRGAAAANCC-3', located in the enhancer region of zygotic genes such as Zen, Twist, Snail and Decapentaplegic, promoting their expression. Part of a signaling pathway involving NF-kappa-B and Toll-related receptors, that functions in the apoptosis of unfit cells during cell competition. Mediates an immune response in larvae. May be part of a NF-kappa-B and Tollo signaling cascade that regulates development of the peripheral nervous system. The polypeptide is Embryonic polarity protein dorsal (dl) (Drosophila melanogaster (Fruit fly)).